The primary structure comprises 461 residues: Argininosuccinate lyase (461 aa).

It belongs to the lyase 1 family. Argininosuccinate lyase subfamily.

The protein localises to the cytoplasm. The enzyme catalyses 2-(N(omega)-L-arginino)succinate = fumarate + L-arginine. It functions in the pathway amino-acid biosynthesis; L-arginine biosynthesis; L-arginine from L-ornithine and carbamoyl phosphate: step 3/3. The chain is Argininosuccinate lyase from Aeromonas hydrophila subsp. hydrophila (strain ATCC 7966 / DSM 30187 / BCRC 13018 / CCUG 14551 / JCM 1027 / KCTC 2358 / NCIMB 9240 / NCTC 8049).